The following is a 353-amino-acid chain: UPF0283 membrane protein YcjF (353 aa).

The next 3 membrane-spanning stretches (helical) occupy residues methionine 70–threonine 90, valine 100–valine 120, and glutamate 213–tryptophan 233.

This sequence belongs to the UPF0283 family.

The protein localises to the cell inner membrane. This is UPF0283 membrane protein YcjF from Escherichia fergusonii (strain ATCC 35469 / DSM 13698 / CCUG 18766 / IAM 14443 / JCM 21226 / LMG 7866 / NBRC 102419 / NCTC 12128 / CDC 0568-73).